The sequence spans 37 residues: uncharacterized protein (37 aa).

A disordered region spans residues 1-37 (MGQVEKARQGQFARPHHSDSQRRVRAWSRIQRRARSF). Residues 23–37 (RVRAWSRIQRRARSF) show a composition bias toward basic residues.

This is an uncharacterized protein from Bacillus phage phi105 (Bacteriophage phi-105).